A 589-amino-acid chain; its full sequence is Sphingosine-1-phosphate lyase (589 aa).

Residues 1 to 58 (MSGVSNKTVSINGWYGMPIHLLREEGDFAQFMILTINELKIAIHGYLRNTPWYNMLKD) are Lumenal-facing. Asn-6 carries an N-linked (GlcNAc...) asparagine glycan. Residues 59–76 (YLFVIFCYKLISNFFYLL) form a helical membrane-spanning segment. Over 77–589 (KVYGPVRLAV…LGPGEDTATK (513 aa)) the chain is Cytoplasmic. The residue at position 380 (Lys-380) is an N6-(pyridoxal phosphate)lysine.

Belongs to the group II decarboxylase family. Sphingosine-1-phosphate lyase subfamily. In terms of assembly, homodimer. The cofactor is pyridoxal 5'-phosphate. Post-translationally, glycosylated.

Its subcellular location is the endoplasmic reticulum membrane. It catalyses the reaction sphinganine 1-phosphate = hexadecanal + phosphoethanolamine. The enzyme catalyses (4R)-hydroxysphinganine 1-phosphate = (2R)-hydroxyhexadecanal + phosphoethanolamine. It participates in lipid metabolism; sphingolipid metabolism. In terms of biological role, sphingosine-1-phosphate lyase that cleaves phosphorylated sphingoid bases (PSBs), such as sphingosine-1-phosphate, into fatty aldehydes and phosphoethanolamine. Prefers C-16 dihydrosphingosine-l-phosphate (DHS-P) as a substrate. Regulates intracellular levels of sphingolipid long-chain base phosphates (LCBPs). Plays a role in the regulation of global responses to nutrient deprivation in yeast. The protein is Sphingosine-1-phosphate lyase of Saccharomyces cerevisiae (strain ATCC 204508 / S288c) (Baker's yeast).